A 373-amino-acid chain; its full sequence is LIM domain-binding protein 1 (373 aa).

Disordered stretches follow at residues 248 to 297 (PPAE…LSSQ) and 329 to 373 (DAAN…QASQ). The span at 266–282 (SGGSTMSSGGGNTNNSN) shows a compositional bias: low complexity. Over residues 288–297 (PASTFALSSQ) the composition is skewed to polar residues. The LIM interaction domain (LID) domain occupies 298–337 (DVMVVGEPTLMGGEFGDEDERLITRLENTQFDAANGIDDE).

Belongs to the LDB family. As to quaternary structure, forms homodimers and heterodimers. Interacts with and activates lhx1/lim1. The stoichiometry of lhx1/lim1 and ldb1 is important for their function and an excess of ldb1 can inhibit lhx1/lim1 function. When bound to lhx1/lim1, escapes degradation by rnf12. Interacts with the N-terminal region of rnf12. Post-translationally, undergoes rnf12-mediated ubiquitin-proteasome-dependent degradation.

The protein resides in the nucleus. Binds to the LIM domain of a wide variety of LIM domain-containing transcription factors. Acts as a coactivator together with otx2 to stimulate lhx1/lim1-mediated activation of the gsc promoter in the Spemann organizer. Acts synergistically with lhx1/lim1 and ssbp in axis formation. This chain is LIM domain-binding protein 1, found in Xenopus tropicalis (Western clawed frog).